Consider the following 125-residue polypeptide: Ribonuclease P protein component (125 aa).

Belongs to the RnpA family. In terms of assembly, consists of a catalytic RNA component (M1 or rnpB) and a protein subunit.

The catalysed reaction is Endonucleolytic cleavage of RNA, removing 5'-extranucleotides from tRNA precursor.. Functionally, RNaseP catalyzes the removal of the 5'-leader sequence from pre-tRNA to produce the mature 5'-terminus. It can also cleave other RNA substrates such as 4.5S RNA. The protein component plays an auxiliary but essential role in vivo by binding to the 5'-leader sequence and broadening the substrate specificity of the ribozyme. This Oleidesulfovibrio alaskensis (strain ATCC BAA-1058 / DSM 17464 / G20) (Desulfovibrio alaskensis) protein is Ribonuclease P protein component.